The sequence spans 172 residues: 6,7-dimethyl-8-ribityllumazine synthase (172 aa).

5-amino-6-(D-ribitylamino)uracil contacts are provided by residues phenylalanine 24, 58–60 (ALE), and 82–84 (AVI). 87-88 (ET) is a binding site for (2S)-2-hydroxy-3-oxobutyl phosphate. Histidine 90 serves as the catalytic Proton donor. Asparagine 115 is a 5-amino-6-(D-ribitylamino)uracil binding site. Arginine 129 is a (2S)-2-hydroxy-3-oxobutyl phosphate binding site. The interval 150–172 (ALEQLDGDEDDEGEGEDDEEERA) is disordered. Residues 154–172 (LDGDEDDEGEGEDDEEERA) are compositionally biased toward acidic residues.

This sequence belongs to the DMRL synthase family.

It carries out the reaction (2S)-2-hydroxy-3-oxobutyl phosphate + 5-amino-6-(D-ribitylamino)uracil = 6,7-dimethyl-8-(1-D-ribityl)lumazine + phosphate + 2 H2O + H(+). Its pathway is cofactor biosynthesis; riboflavin biosynthesis; riboflavin from 2-hydroxy-3-oxobutyl phosphate and 5-amino-6-(D-ribitylamino)uracil: step 1/2. Catalyzes the formation of 6,7-dimethyl-8-ribityllumazine by condensation of 5-amino-6-(D-ribitylamino)uracil with 3,4-dihydroxy-2-butanone 4-phosphate. This is the penultimate step in the biosynthesis of riboflavin. This is 6,7-dimethyl-8-ribityllumazine synthase from Paraburkholderia phymatum (strain DSM 17167 / CIP 108236 / LMG 21445 / STM815) (Burkholderia phymatum).